The primary structure comprises 300 residues: Ribosomal protein bS6--L-glutamate ligase (300 aa).

An ATP-grasp domain is found at 104-287; that stretch reads MQLLARQGID…IAGKMIRWIE (184 aa). Residues K141, 178–179, D187, and 211–213 each bind ATP; these read EY and RSN. Mg(2+)-binding residues include D248, E260, and N262. Positions 248, 260, and 262 each coordinate Mn(2+).

Belongs to the RimK family. It depends on Mg(2+) as a cofactor. Mn(2+) is required as a cofactor.

An L-glutamate ligase that catalyzes the ATP-dependent post-translational addition of glutamate residues to the C-terminus of ribosomal protein bS6 (RpsF). Is also able to catalyze the synthesis of poly-alpha-glutamate in vitro, via ATP hydrolysis from unprotected glutamate as substrate. The number of glutamate residues added to either RpsF or to poly-alpha-glutamate changes with pH. The polypeptide is Ribosomal protein bS6--L-glutamate ligase (Shigella boydii serotype 4 (strain Sb227)).